A 459-amino-acid chain; its full sequence is Glycosyl hydrolase family 109 protein (459 aa).

Residues 1–31 (MHNIHRRNFLKAAGAATAGLVTANIALSAYA) constitute a signal peptide (tat-type signal). NAD(+) contacts are provided by residues 64–65 (ER), Asp-86, 135–138 (WEWH), 155–156 (EV), and Asn-184. Residues Tyr-213, Arg-232, 244–247 (YPTH), and Tyr-326 each bind substrate. Tyr-244 is an NAD(+) binding site.

Belongs to the Gfo/Idh/MocA family. Glycosyl hydrolase 109 subfamily. NAD(+) serves as cofactor. In terms of processing, predicted to be exported by the Tat system. The position of the signal peptide cleavage has not been experimentally proven.

Its function is as follows. Glycosidase. The chain is Glycosyl hydrolase family 109 protein from Shewanella baltica (strain OS185).